A 692-amino-acid polypeptide reads, in one-letter code: Elongation factor G 1 (692 aa).

A tr-type G domain is found at 8–283 (EKTRNIGIMA…SVVEYLPSPV (276 aa)). GTP is bound by residues 17–24 (AHIDAGKT), 81–85 (DTPGH), and 135–138 (NKMD).

The protein belongs to the TRAFAC class translation factor GTPase superfamily. Classic translation factor GTPase family. EF-G/EF-2 subfamily.

It localises to the cytoplasm. Catalyzes the GTP-dependent ribosomal translocation step during translation elongation. During this step, the ribosome changes from the pre-translocational (PRE) to the post-translocational (POST) state as the newly formed A-site-bound peptidyl-tRNA and P-site-bound deacylated tRNA move to the P and E sites, respectively. Catalyzes the coordinated movement of the two tRNA molecules, the mRNA and conformational changes in the ribosome. This Geobacter metallireducens (strain ATCC 53774 / DSM 7210 / GS-15) protein is Elongation factor G 1.